The chain runs to 165 residues: Bark lectin isoform 2 (165 aa).

N-linked (GlcNAc...) asparagine glycosylation is found at Asn-27 and Asn-57. Disulfide bonds link Cys-33–Cys-80 and Cys-126–Cys-133.

Belongs to the protease inhibitor I3 (leguminous Kunitz-type inhibitor) family. As to quaternary structure, dimer.

Glucose and N-acetylglucosamine binding lectin. Has hemagglutinating activity against human and rabbit erythrocytes which does not require divalent cations. Inhibits factor Xa and, to a lesser extent, trypsin. Does not inhibit neutrophil elastase, human plasma kallikrein, papain, human plasmin, porcine pancreatic kallikrein and bovin chymotrypsin. Has insecticidal activity against the termite species N.corniger. Induces apoptosis in prostrate cancer cell lines DU145 and PC3. This Crateva tapia (Garlic-pear tree) protein is Bark lectin isoform 2.